The chain runs to 201 residues: Ras-related protein Rab-35 (201 aa).

Gly-18, Val-19, Gly-20, Lys-21, Ser-22, Ser-23, Ser-34, Gly-35, Tyr-37, Thr-39, and Thr-40 together coordinate GTP. Ser-22 provides a ligand contact to Mg(2+). Positions 30–42 (DNTFSGSYITTIG) match the Switch 1 motif. Mg(2+) is bound by residues Thr-40 and Asp-63. The Switch 2 motif lies at 64-80 (TAGQERFRTITSTYYRG). GTP is bound at residue Gly-66. Phosphothreonine; by LRRK2 is present on Thr-72. Ser-75 bears the O-(2-cholinephosphoryl)serine mark. Tyr-77 is modified (O-AMP-tyrosine). GTP-binding residues include Asn-120, Lys-121, Asp-123, Ala-151, and Lys-152. S-geranylgeranyl cysteine attachment occurs at residues Cys-200 and Cys-201.

It belongs to the small GTPase superfamily. Rab family. As to quaternary structure, interacts with DENND1A and DENND1B; in a nucleotide-dependent manner. Interacts with DENND1C; weak interaction which is nucleotide-independent. Interacts (GTP-bound form) with ACAP2, RUSC2, OCRL MICAL1 and MICALL1; the interaction is direct and probably recruits these effectors to membranes. Interacts with EHD1; the interaction is indirect through MICALL1 and probably recruits EHD1 to membranes. Interacts with GDI1, GDI2, CHM and CHML; phosphorylation at Thr-72 by LRRK2 disrupts these interactions. The cofactor is Mg(2+). Post-translationally, phosphorylation at Thr-72 by LRRK2 prevents the association of regulatory proteins including CHM, CHML and GDP dissociation inhibitors GDI1 and GDI2. In terms of processing, AMPylation at Tyr-77 by L.pneumophila DrrA occurs in the switch 2 region and leads to moderate inactivation of the GTPase activity. It appears to prolong the lifetime of the GTP state of RAB1B by restricting access of GTPase effectors to switch 2 and blocking effector-stimulated GTP hydrolysis, thereby rendering RAB35 constitutively active. Phosphocholinated by L.pneumophila AnkX. Both GDP-bound and GTP-bound forms can be phosphocholinated. Phosphocholination inhibits the GEF activity of DENND1A.

Its subcellular location is the cell membrane. The protein localises to the membrane. It is found in the clathrin-coated pit. The protein resides in the cytoplasmic vesicle. It localises to the clathrin-coated vesicle. Its subcellular location is the endosome. The protein localises to the melanosome. It catalyses the reaction GTP + H2O = GDP + phosphate + H(+). Its activity is regulated as follows. Regulated by guanine nucleotide exchange factors (GEFs) including DENND1A, DENND1B and DENND1C which promote the exchange of bound GDP for free GTP. Regulated by GTPase activating proteins (GAPs) including TBC1D10 and TBC1D13 which increase GTP hydrolysis activity. Inhibited by GDP dissociation inhibitors (GDIs) which prevent Rab-GDP dissociation. The small GTPases Rab are key regulators of intracellular membrane trafficking, from the formation of transport vesicles to their fusion with membranes. Rabs cycle between an inactive GDP-bound form and an active GTP-bound form that is able to recruit to membranes different sets of downstream effectors directly responsible for vesicle formation, movement, tethering and fusion. RAB35 is involved in the process of endocytosis and is an essential rate-limiting regulator of the fast recycling pathway back to the plasma membrane. During cytokinesis, required for the postfurrowing terminal steps, namely for intercellular bridge stability and abscission, possibly by controlling phosphatidylinositol 4,5-bis phosphate (PIP2) and SEPT2 localization at the intercellular bridge. May indirectly regulate neurite outgrowth. Together with TBC1D13 may be involved in regulation of insulin-induced glucose transporter SLC2A4/GLUT4 translocation to the plasma membrane in adipocytes. This is Ras-related protein Rab-35 from Homo sapiens (Human).